The primary structure comprises 315 residues: Eukaryotic translation initiation factor 2 subunit 1 (315 aa).

Residues 17-88 form the S1 motif domain; sequence EDVVMVNVRS…EKGYIDLSKR (72 aa). The residue at position 49 (S49) is a Phosphoserine; by HRI. The residue at position 52 (S52) is a Phosphoserine. At K141 the chain carries N6-acetyllysine. Phosphoserine is present on S158. 2 positions are modified to phosphothreonine: T279 and T281. The disordered stretch occupies residues 292 to 315; that stretch reads RLERENAEVDGDDDAEEMEAKAED. Positions 299–308 are enriched in acidic residues; it reads EVDGDDDAEE.

Belongs to the eIF-2-alpha family. In terms of assembly, eukaryotic translation initiation factor 2 eIF2 is a heterotrimeric complex composed of an alpha (EIF2S1), a beta (EIF2S2) and a gamma (EIF2S3) chain. eIF2 is member of the 43S pre-initiation complex (43S PIC). eIF2 forms a complex with at least CELF1/CUGBP1, CALR, CALR3, EIF2S1, EIF2S2, HSP90B1 and HSPA5. Interaction with METAP2 protects EIF2S1 from inhibitory phosphorylation. Interacts with ABCF1. Associates with ribosomes. Interacts with DDX3X in an RNA-independent manner. Phosphorylation at Ser-49 and Ser-52 stabilizes the eIF-2/GDP/eIF2B complex and prevents GDP/GTP exchange reaction, thus impairing the recycling of eIF-2 between successive rounds of initiation and leading to global inhibition of translation, while concomitantly initiating the preferential translation of integrated stress response (ISR)-specific mRNAs. Substrate for at least 4 kinases: EIF2AK1/HRI, EIF2AK2/PKR, EIF2AK3/PERK and EIF2AK4/GCN2. Phosphorylation at Ser-52 by the EIF2AK3/PERK protein kinase occurs in response to the unfolded protein response. Phosphorylation on Ser-52 by the EIF2AK4/GCN2 protein kinase occurs in response to amino acid starvation and UV irradiation. Phosphorylation at Ser-52 by EIF2AK1/HRI in response to mitochondrial damage promotes relocalization to the mitochondrial surface.

It localises to the cytoplasm. Its subcellular location is the stress granule. The protein resides in the cytosol. It is found in the mitochondrion. Its activity is regulated as follows. Activity is regulated by phosphorylation at Ser-49 and Ser-52, which stabilizes the eIF2/GDP/eIF2B complex and prevents the eIF2B-mediated exchange of GDP for GTP, thereby preventing the formation of the 43S pre-initiation complex (43S PIC). This results in the global attenuation of 5' cap-dependent protein synthesis and concomitant translation of ISR-specific mRNAs that contain a short upstream open reading frame (uORF) in their 5' UTR, such as ATF4, ATF5, DDIT3/CHOP and PPP1R15A/GADD34. Member of the eIF2 complex that functions in the early steps of protein synthesis by forming a ternary complex with GTP and initiator tRNA. This complex binds to a 40S ribosomal subunit, followed by mRNA binding to form a 43S pre-initiation complex. Junction of the 60S ribosomal subunit to form the 80S initiation complex is preceded by hydrolysis of the GTP bound to eIF2 and release of an eIF2-GDP binary complex. In order for eIF2 to recycle and catalyze another round of initiation, the GDP bound to eIF2 must exchange with GTP by way of a reaction catalyzed by eIF2B. EIF2S1/eIF2-alpha is a key component of the integrated stress response (ISR), required for adaptation to various stress: phosphorylation by metabolic-stress sensing protein kinases (EIF2AK1/HRI, EIF2AK2/PKR, EIF2AK3/PERK and EIF2AK4/GCN2) in response to stress converts EIF2S1/eIF2-alpha in a global protein synthesis inhibitor, leading to a attenuation of cap-dependent translation, while concomitantly initiating the preferential translation of ISR-specific mRNAs, such as the transcriptional activators ATF4 and QRICH1, and hence allowing ATF4- and QRICH1-mediated reprogramming. EIF2S1/eIF2-alpha also acts as an activator of mitophagy in response to mitochondrial damage: phosphorylation by EIF2AK1/HRI promotes relocalization to the mitochondrial surface, thereby triggering PRKN-independent mitophagy. The chain is Eukaryotic translation initiation factor 2 subunit 1 (EIF2S1) from Sus scrofa (Pig).